Here is a 204-residue protein sequence, read N- to C-terminus: Cytochrome c biogenesis ATP-binding export protein CcmA (204 aa).

The ABC transporter domain occupies 2–202 (LEIRNVTCIR…DSNELKKIRL (201 aa)). An ATP-binding site is contributed by 34–41 (GQNGAGKT).

It belongs to the ABC transporter superfamily. CcmA exporter (TC 3.A.1.107) family. As to quaternary structure, the complex is composed of two ATP-binding proteins (CcmA) and two transmembrane proteins (CcmB).

It is found in the cell inner membrane. It catalyses the reaction heme b(in) + ATP + H2O = heme b(out) + ADP + phosphate + H(+). Its function is as follows. Part of the ABC transporter complex CcmAB involved in the biogenesis of c-type cytochromes; once thought to export heme, this seems not to be the case, but its exact role is uncertain. Responsible for energy coupling to the transport system. The polypeptide is Cytochrome c biogenesis ATP-binding export protein CcmA (Aliivibrio fischeri (strain ATCC 700601 / ES114) (Vibrio fischeri)).